Consider the following 76-residue polypeptide: Bomanin Tailed 2 (76 aa).

An N-terminal signal peptide occupies residues 1-22; sequence MKALQVAGTLMLLFCLLAAVNA. Residues 23-24 constitute a propeptide, removed by a dipeptidylpeptidase; it reads TP. Residues Cys-33 and Cys-36 are joined by a disulfide bond.

It belongs to the bomanin family.

Its subcellular location is the secreted. In terms of biological role, secreted immune-induced peptide induced by Toll signaling. Has a role in resistance to bacterial and fungal infections. The strength of antimicrobial activity appears to correlate with the overall level of expression. The sequence is that of Bomanin Tailed 2 from Drosophila melanogaster (Fruit fly).